The chain runs to 677 residues: Nuclear fusion protein FUS2 (677 aa).

Thr-20 bears the Phosphothreonine mark. Ser-67, Ser-72, and Ser-84 each carry phosphoserine. Thr-88 is modified (phosphothreonine). A phosphoserine mark is found at Ser-100 and Ser-106. The DH domain occupies 112–326 (KFYKIVQEFY…KYSLFSNKLE (215 aa)).

It is found in the cell tip. Promotes cell fusion during zygote formation. The protein is Nuclear fusion protein FUS2 (FUS2) of Saccharomyces cerevisiae (strain ATCC 204508 / S288c) (Baker's yeast).